The following is a 240-amino-acid chain: Phosphatidylserine decarboxylase proenzyme (240 aa).

Ser-209 functions as the Schiff-base intermediate with substrate; via pyruvic acid in the catalytic mechanism. Ser-209 is modified (pyruvic acid (Ser); by autocatalysis).

It belongs to the phosphatidylserine decarboxylase family. PSD-A subfamily. Heterodimer of a large membrane-associated beta subunit and a small pyruvoyl-containing alpha subunit. Pyruvate is required as a cofactor. In terms of processing, is synthesized initially as an inactive proenzyme. Formation of the active enzyme involves a self-maturation process in which the active site pyruvoyl group is generated from an internal serine residue via an autocatalytic post-translational modification. Two non-identical subunits are generated from the proenzyme in this reaction, and the pyruvate is formed at the N-terminus of the alpha chain, which is derived from the carboxyl end of the proenzyme. The post-translation cleavage follows an unusual pathway, termed non-hydrolytic serinolysis, in which the side chain hydroxyl group of the serine supplies its oxygen atom to form the C-terminus of the beta chain, while the remainder of the serine residue undergoes an oxidative deamination to produce ammonia and the pyruvoyl prosthetic group on the alpha chain.

It localises to the cell membrane. It carries out the reaction a 1,2-diacyl-sn-glycero-3-phospho-L-serine + H(+) = a 1,2-diacyl-sn-glycero-3-phosphoethanolamine + CO2. It participates in phospholipid metabolism; phosphatidylethanolamine biosynthesis; phosphatidylethanolamine from CDP-diacylglycerol: step 2/2. Catalyzes the formation of phosphatidylethanolamine (PtdEtn) from phosphatidylserine (PtdSer). This Mycobacterium avium (strain 104) protein is Phosphatidylserine decarboxylase proenzyme.